An 86-amino-acid chain; its full sequence is U-myrmeciitoxin(01)-Mg1a (86 aa).

An N-terminal signal peptide occupies residues 1–26 (MKLLYLLLTLAIIFVLTIVHAPNVEA). The propeptide occupies 27–52 (KALADPESDAVGFADAFGDADAEATG). Residue L85 is modified to Leucine amide.

It belongs to the formicidae venom precursor-01 superfamily. Expressed by the venom gland. This toxin is detected along the entire venom gland, as well as in the venom reservoir, the venom duct and in the venom. No toxin are detected in the Dufour's gland.

The protein localises to the secreted. Its subcellular location is the target cell membrane. Functionally, toxin that may interact with target cell membranes, producing a concentration-dependent leak in ion conductance, possibly via multimeric pore formation. It produces an immediate sharp increase of calcium concentration in all DRG neurons. This influx in calcium stabilizes without resulting in any observable dye leakage, showing that the effect is not simply cytolytic. This toxin may be one of the major contributors to the pain associated with envenomation. The toxin also displays a weak cytotoxicity (on HEK cells) and some antimicrobial activity (MIC=2.5 uM on C.neoformans (var. grubii), MIC=10.2 uM on S.aureus), but is not hemolytic to human erythtrocytes. In vivo, intraplantar injection into mice causes spontaneous nocifensive behavior (licking, flinching, or shaking of the paw), which lasts 5-7 minutes (10 and 100 uM tested). Mechanical and heat hypoalgesia are observed at 20 and 25 minutes after injection (highest dose tested of 100 uM). In vivo, injection into crickets (A.domesticus) causes an immediate, dose-dependent, reversible and nonlethal incapacitation that lasts about 53 minutes at the highest dose tested (60 ug/g). The polypeptide is U-myrmeciitoxin(01)-Mg1a (Myrmecia gulosa (Red bulldog ant)).